The following is a 323-amino-acid chain: MLDIAMPKIEVVTAAENYGRFKIEPLDPGYGHTLGNALRRVLLSSIPGAAITKIKIDGVFHEFSTISGIKEDVTEIVLNIKGVRLRSYAERPVKISLSKRGSGIVRAADIDAPSNVEIVNPFHYICTIDRDDAMLEMEMTVERGRGYLPADQRDALPIGEIPIDAIFTPVPKVNYVVENIRVGQATDFDSLLIEIWTDGTIKPGDALSHAAQVLVQYSQTIADFNRLSTETESTAAPNGLAIPADIYDTPIEELDLSTRTYNCLKRADITKVGQVLEMDEKALLSVRNLGQKSMEEIRDKLIERGYIPRIGQTTNSSPAGIES.

Positions 1–225 (MLDIAMPKIE…QYSQTIADFN (225 aa)) are alpha N-terminal domain (alpha-NTD). Residues 243–323 (PADIYDTPIE…TNSSPAGIES (81 aa)) are alpha C-terminal domain (alpha-CTD).

It belongs to the RNA polymerase alpha chain family. Homodimer. The RNAP catalytic core consists of 2 alpha, 1 beta, 1 beta' and 1 omega subunit. When a sigma factor is associated with the core the holoenzyme is formed, which can initiate transcription.

It carries out the reaction RNA(n) + a ribonucleoside 5'-triphosphate = RNA(n+1) + diphosphate. Functionally, DNA-dependent RNA polymerase catalyzes the transcription of DNA into RNA using the four ribonucleoside triphosphates as substrates. The sequence is that of DNA-directed RNA polymerase subunit alpha from Roseiflexus castenholzii (strain DSM 13941 / HLO8).